Consider the following 492-residue polypeptide: Ketol-acid reductoisomerase (NADP(+)) (492 aa).

The KARI N-terminal Rossmann domain occupies 15–208; that stretch reads AQLGKCRFMA…GGHRAGVLES (194 aa). NADP(+) is bound by residues 45–48, arginine 68, arginine 76, serine 78, and 108–110; these read CGAQ and DKQ. The active site involves histidine 132. Glycine 158 contributes to the NADP(+) binding site. KARI C-terminal knotted domains are found at residues 209–344 and 345–485; these read SFVA…NAPQ and FEGK…MTDM. 4 residues coordinate Mg(2+): aspartate 217, glutamate 221, glutamate 389, and glutamate 393. Serine 414 serves as a coordination point for substrate.

The protein belongs to the ketol-acid reductoisomerase family. Mg(2+) serves as cofactor.

It carries out the reaction (2R)-2,3-dihydroxy-3-methylbutanoate + NADP(+) = (2S)-2-acetolactate + NADPH + H(+). The catalysed reaction is (2R,3R)-2,3-dihydroxy-3-methylpentanoate + NADP(+) = (S)-2-ethyl-2-hydroxy-3-oxobutanoate + NADPH + H(+). Its pathway is amino-acid biosynthesis; L-isoleucine biosynthesis; L-isoleucine from 2-oxobutanoate: step 2/4. It participates in amino-acid biosynthesis; L-valine biosynthesis; L-valine from pyruvate: step 2/4. Its function is as follows. Involved in the biosynthesis of branched-chain amino acids (BCAA). Catalyzes an alkyl-migration followed by a ketol-acid reduction of (S)-2-acetolactate (S2AL) to yield (R)-2,3-dihydroxy-isovalerate. In the isomerase reaction, S2AL is rearranged via a Mg-dependent methyl migration to produce 3-hydroxy-3-methyl-2-ketobutyrate (HMKB). In the reductase reaction, this 2-ketoacid undergoes a metal-dependent reduction by NADPH to yield (R)-2,3-dihydroxy-isovalerate. This chain is Ketol-acid reductoisomerase (NADP(+)), found in Yersinia enterocolitica serotype O:8 / biotype 1B (strain NCTC 13174 / 8081).